The primary structure comprises 150 residues: UPF0178 protein Shewana3_1627 (150 aa).

Belongs to the UPF0178 family.

The chain is UPF0178 protein Shewana3_1627 from Shewanella sp. (strain ANA-3).